The chain runs to 343 residues: Adenosine kinase (343 aa).

Residue D296 is part of the active site.

Belongs to the carbohydrate kinase PfkB family. It depends on Mg(2+) as a cofactor.

The enzyme catalyses adenosine + ATP = AMP + ADP + H(+). The protein operates within purine metabolism; AMP biosynthesis via salvage pathway; AMP from adenosine: step 1/1. Functionally, ATP dependent phosphorylation of adenosine and other related nucleoside analogs to monophosphate derivatives. Can also act on the cytokinin isopentenyladenosine to produce isopentenyladenosine monophosphate. The chain is Adenosine kinase (ADK) from Physcomitrium patens (Spreading-leaved earth moss).